Reading from the N-terminus, the 447-residue chain is Phosphoglucosamine mutase (447 aa).

Ser-101 acts as the Phosphoserine intermediate in catalysis. Mg(2+) contacts are provided by Ser-101, Asp-242, Asp-244, and Asp-246. Residue Ser-101 is modified to Phosphoserine.

It belongs to the phosphohexose mutase family. It depends on Mg(2+) as a cofactor. In terms of processing, activated by phosphorylation.

It carries out the reaction alpha-D-glucosamine 1-phosphate = D-glucosamine 6-phosphate. Its function is as follows. Catalyzes the conversion of glucosamine-6-phosphate to glucosamine-1-phosphate. This chain is Phosphoglucosamine mutase, found in Bradyrhizobium diazoefficiens (strain JCM 10833 / BCRC 13528 / IAM 13628 / NBRC 14792 / USDA 110).